The sequence spans 381 residues: Probable tRNA sulfurtransferase (381 aa).

The region spanning 57–160 (EKGIEKLKSV…NKAYVYSKKI (104 aa)) is the THUMP domain. Residues 177-178 (ML), 202-203 (YF), Arg-259, Gly-281, and Gln-290 each bind ATP.

This sequence belongs to the ThiI family.

Its subcellular location is the cytoplasm. The enzyme catalyses [ThiI sulfur-carrier protein]-S-sulfanyl-L-cysteine + a uridine in tRNA + 2 reduced [2Fe-2S]-[ferredoxin] + ATP + H(+) = [ThiI sulfur-carrier protein]-L-cysteine + a 4-thiouridine in tRNA + 2 oxidized [2Fe-2S]-[ferredoxin] + AMP + diphosphate. The catalysed reaction is [ThiS sulfur-carrier protein]-C-terminal Gly-Gly-AMP + S-sulfanyl-L-cysteinyl-[cysteine desulfurase] + AH2 = [ThiS sulfur-carrier protein]-C-terminal-Gly-aminoethanethioate + L-cysteinyl-[cysteine desulfurase] + A + AMP + 2 H(+). It functions in the pathway cofactor biosynthesis; thiamine diphosphate biosynthesis. Functionally, catalyzes the ATP-dependent transfer of a sulfur to tRNA to produce 4-thiouridine in position 8 of tRNAs, which functions as a near-UV photosensor. Also catalyzes the transfer of sulfur to the sulfur carrier protein ThiS, forming ThiS-thiocarboxylate. This is a step in the synthesis of thiazole, in the thiamine biosynthesis pathway. The sulfur is donated as persulfide by IscS. The protein is Probable tRNA sulfurtransferase of Clostridium kluyveri (strain NBRC 12016).